The following is a 172-amino-acid chain: Transcription factor E (172 aa).

Positions 8-90 (DDPVVQKYLH…LWTFQYENVP (83 aa)) constitute an HTH TFE/IIEalpha-type domain.

The protein belongs to the TFE family. Monomer. Interaction with RNA polymerase subunits RpoF and RpoE is necessary for Tfe stimulatory transcription activity. Able to interact with Tbp and RNA polymerase in the absence of DNA promoter. Interacts both with the preinitiation and elongation complexes.

Transcription factor that plays a role in the activation of archaeal genes transcribed by RNA polymerase. Facilitates transcription initiation by enhancing TATA-box recognition by TATA-box-binding protein (Tbp), and transcription factor B (Tfb) and RNA polymerase recruitment. Not absolutely required for transcription in vitro, but particularly important in cases where Tbp or Tfb function is not optimal. It dynamically alters the nucleic acid-binding properties of RNA polymerases by stabilizing the initiation complex and destabilizing elongation complexes. Seems to translocate with the RNA polymerase following initiation and acts by binding to the non template strand of the transcription bubble in elongation complexes. The sequence is that of Transcription factor E from Halobacterium salinarum (strain ATCC 700922 / JCM 11081 / NRC-1) (Halobacterium halobium).